Reading from the N-terminus, the 507-residue chain is Cytochrome P450 4A14 (507 aa).

Positions 1–4 (MGFS) are cleaved as a propeptide — removed in mature form. Glu318 is a binding site for heme. The residue at position 437 (Ser437) is a Phosphoserine. Residue Cys454 participates in heme binding.

It belongs to the cytochrome P450 family. It depends on heme as a cofactor.

The protein localises to the endoplasmic reticulum membrane. It localises to the microsome membrane. It catalyses the reaction an omega-methyl-long-chain fatty acid + reduced [NADPH--hemoprotein reductase] + O2 = an omega-hydroxy-long-chain fatty acid + oxidized [NADPH--hemoprotein reductase] + H2O + H(+). It carries out the reaction dodecanoate + reduced [NADPH--hemoprotein reductase] + O2 = (11R)-hydroxydodecanoate + oxidized [NADPH--hemoprotein reductase] + H2O + H(+). The enzyme catalyses dodecanoate + reduced [NADPH--hemoprotein reductase] + O2 = 12-hydroxydodecanoate + oxidized [NADPH--hemoprotein reductase] + H2O + H(+). The catalysed reaction is tetradecanoate + reduced [NADPH--hemoprotein reductase] + O2 = 14-hydroxytetradecanoate + oxidized [NADPH--hemoprotein reductase] + H2O + H(+). Its pathway is lipid metabolism; fatty acid metabolism. A cytochrome P450 monooxygenase that catalyzes omega and omega-1 hydroxylation of saturated fatty acids. Exhibits preferential omega versus omega-1 regioselectivity and (R) versus (S) stereoselectivity for hydroxylation of dodecanoic (lauric) acid. Mechanistically, uses molecular oxygen inserting one oxygen atom into a substrate, and reducing the second into a water molecule, with two electrons provided by NADPH via cytochrome P450 reductase (CPR; NADPH-ferrihemoprotein reductase). The sequence is that of Cytochrome P450 4A14 from Rattus norvegicus (Rat).